We begin with the raw amino-acid sequence, 424 residues long: Tyrosine--tRNA ligase (424 aa).

Tyr37 serves as a coordination point for L-tyrosine. A 'HIGH' region motif is present at residues 42-51 (PTADSLHLGH). Residues Tyr175 and Gln179 each contribute to the L-tyrosine site. A 'KMSKS' region motif is present at residues 235–239 (KFGKT). Lys238 is an ATP binding site. The region spanning 357–414 (ADLQQALVNAELVPSRGQARTMISSNAVAINGEKQSDPEYAFTDADRLFGRYTLLRRG) is the S4 RNA-binding domain.

Belongs to the class-I aminoacyl-tRNA synthetase family. TyrS type 1 subfamily. Homodimer.

Its subcellular location is the cytoplasm. The enzyme catalyses tRNA(Tyr) + L-tyrosine + ATP = L-tyrosyl-tRNA(Tyr) + AMP + diphosphate + H(+). Functionally, catalyzes the attachment of tyrosine to tRNA(Tyr) in a two-step reaction: tyrosine is first activated by ATP to form Tyr-AMP and then transferred to the acceptor end of tRNA(Tyr). The protein is Tyrosine--tRNA ligase of Yersinia enterocolitica serotype O:8 / biotype 1B (strain NCTC 13174 / 8081).